The following is a 269-amino-acid chain: Interleukin-1 beta (269 aa).

The propeptide occupies M1 to D112.

The protein belongs to the IL-1 family. Monomer. In its precursor form, weakly interacts with full-length MEFV; the mature cytokine does not interact at all. Interacts with integrins ITGAV:ITGBV and ITGA5:ITGB1; integrin-binding is required for IL1B signaling. Interacts with cargo receptor TMED10; the interaction is direct and is required for the secretion of IL1B mature form. Interacts with HSP90AB1; the interaction facilitates cargo translocation into the ERGIC. Interacts with HSP90B1; the interaction facilitates cargo translocation into the ERGIC.

The protein resides in the cytoplasm. It localises to the cytosol. Its subcellular location is the secreted. The protein localises to the lysosome. It is found in the extracellular exosome. Potent pro-inflammatory cytokine. Initially discovered as the major endogenous pyrogen, induces prostaglandin synthesis, neutrophil influx and activation, T-cell activation and cytokine production, B-cell activation and antibody production, and fibroblast proliferation and collagen production. Promotes Th17 differentiation of T-cells. Synergizes with IL12/interleukin-12 to induce IFNG synthesis from T-helper 1 (Th1) cells. Plays a role in angiogenesis by inducing VEGF production synergistically with TNF and IL6. Involved in transduction of inflammation downstream of pyroptosis: its mature form is specifically released in the extracellular milieu by passing through the gasdermin-D (GSDMD) pore. This chain is Interleukin-1 beta (IL1B), found in Trichosurus vulpecula (Brush-tailed possum).